The following is a 565-amino-acid chain: NAD-dependent malic enzyme (565 aa).

Tyr-104 (proton donor) is an active-site residue. Arg-157 contributes to the NAD(+) binding site. Catalysis depends on Lys-175, which acts as the Proton acceptor. Positions 246, 247, and 270 each coordinate a divalent metal cation. NAD(+)-binding residues include Asp-270 and Asn-418.

It belongs to the malic enzymes family. Homotetramer. Mg(2+) serves as cofactor. Requires Mn(2+) as cofactor.

The catalysed reaction is (S)-malate + NAD(+) = pyruvate + CO2 + NADH. The enzyme catalyses oxaloacetate + H(+) = pyruvate + CO2. This Photorhabdus laumondii subsp. laumondii (strain DSM 15139 / CIP 105565 / TT01) (Photorhabdus luminescens subsp. laumondii) protein is NAD-dependent malic enzyme.